We begin with the raw amino-acid sequence, 188 residues long: Fructose-1-phosphate phosphatase YqaB (188 aa).

D11 serves as the catalytic Nucleophile. D11, D13, and D167 together coordinate Mg(2+). 11-13 (DMD) provides a ligand contact to substrate.

Belongs to the HAD-like hydrolase superfamily. CbbY/CbbZ/Gph/YieH family. Mg(2+) is required as a cofactor. The cofactor is Mn(2+). Co(2+) serves as cofactor. Requires Zn(2+) as cofactor.

In terms of biological role, catalyzes strongly the dephosphorylation of fructose-1-phosphate (Fru1P) and slightly the dephosphorylation of 6-phosphogluconate (6P-Glu). It has low beta-phosphoglucomutase activity. This chain is Fructose-1-phosphate phosphatase YqaB (yqaB), found in Escherichia coli (strain K12).